Here is a 292-residue protein sequence, read N- to C-terminus: Glycine--tRNA ligase alpha subunit (292 aa).

Belongs to the class-II aminoacyl-tRNA synthetase family. In terms of assembly, tetramer of two alpha and two beta subunits.

Its subcellular location is the cytoplasm. It carries out the reaction tRNA(Gly) + glycine + ATP = glycyl-tRNA(Gly) + AMP + diphosphate. In Buchnera aphidicola subsp. Schizaphis graminum (strain Sg), this protein is Glycine--tRNA ligase alpha subunit.